Reading from the N-terminus, the 207-residue chain is Small ribosomal subunit protein uS4 (207 aa).

Residues 30 to 51 (DKSKFDSKPGQHGRTSGARTSD) are disordered. An S4 RNA-binding domain is found at 97–157 (SRLDNVVYRM…EKSKKQGRIA (61 aa)).

Belongs to the universal ribosomal protein uS4 family. As to quaternary structure, part of the 30S ribosomal subunit. Contacts protein S5. The interaction surface between S4 and S5 is involved in control of translational fidelity.

Functionally, one of the primary rRNA binding proteins, it binds directly to 16S rRNA where it nucleates assembly of the body of the 30S subunit. In terms of biological role, with S5 and S12 plays an important role in translational accuracy. The protein is Small ribosomal subunit protein uS4 of Verminephrobacter eiseniae (strain EF01-2).